The chain runs to 1008 residues: SKI family transcriptional corepressor 2 (1008 aa).

Disordered regions lie at residues H280–D315 and E514–V927. 2 stretches are compositionally biased toward pro residues: residues A284–L294 and A525–V534. 2 stretches are compositionally biased toward low complexity: residues V535–P544 and G578–T595. A compositionally biased stretch (basic and acidic residues) spans G626 to A635. Positions P649 to P666 are enriched in basic residues. Residues A691–P703 show a composition bias toward pro residues. Acidic residues-rich tracts occupy residues D724 to D739 and G748 to E766. Over residues L787–T797 the composition is skewed to basic and acidic residues. Residues S842–H855 are compositionally biased toward low complexity. Composition is skewed to basic and acidic residues over residues P856–E872, T880–K890, and F905–Q915.

This sequence belongs to the SKI family. As to quaternary structure, interacts with SMAD2 and SMAD3. In terms of tissue distribution, expression is restricted to adult and embryonic central nervous system. Expressed at high levels in the developing cerebellum, ventral metencephalon and myelencephalon at 12.5 dpc (at protein level). In the adult cerebellum, expressed specifically in Purkinje cells.

It is found in the nucleus. The protein localises to the cytoplasm. In terms of biological role, acts as a TGF-beta antagonist in the nervous system. Exhibits transcriptional repressor activity. The chain is SKI family transcriptional corepressor 2 from Mus musculus (Mouse).